Reading from the N-terminus, the 87-residue chain is Putative acyl-CoA-binding protein (87 aa).

The ACB domain maps to 1-86 (MSSTFEQAAA…VDELKTKYGM (86 aa)). Residues Lys13, 28-32 (YALFK), Lys50, Lys54, and Tyr73 contribute to the an acyl-CoA site.

This sequence belongs to the ACBP family.

Its subcellular location is the cytoplasm. The protein localises to the nucleus. In terms of biological role, binds medium- and long-chain acyl-CoA esters with very high affinity and may function as an intracellular carrier of acyl-CoA esters. May enhance the activity of the ceramide synthase complex. In Schizosaccharomyces pombe (strain 972 / ATCC 24843) (Fission yeast), this protein is Putative acyl-CoA-binding protein.